The following is an 85-amino-acid chain: Small ribosomal subunit protein uS17 (85 aa).

It belongs to the universal ribosomal protein uS17 family. In terms of assembly, part of the 30S ribosomal subunit.

Functionally, one of the primary rRNA binding proteins, it binds specifically to the 5'-end of 16S ribosomal RNA. The sequence is that of Small ribosomal subunit protein uS17 from Rhodospirillum centenum (strain ATCC 51521 / SW).